The following is a 138-amino-acid chain: Ribulose bisphosphate carboxylase small subunit (138 aa).

This sequence belongs to the RuBisCO small chain family. As to quaternary structure, heterohexadecamer of 8 large and 8 small subunits.

It localises to the plastid. The protein resides in the chloroplast. In terms of biological role, ruBisCO catalyzes two reactions: the carboxylation of D-ribulose 1,5-bisphosphate, the primary event in carbon dioxide fixation, as well as the oxidative fragmentation of the pentose substrate in the photorespiration process. Both reactions occur simultaneously and in competition at the same active site. Although the small subunit is not catalytic it is essential for maximal activity. The chain is Ribulose bisphosphate carboxylase small subunit from Pyropia haitanensis (Red seaweed).